The sequence spans 496 residues: Cytochrome P450 71AV8 (496 aa).

The helical transmembrane segment at 3–23 (ISIPTTLGLAVIIFIIFKLLT) threads the bilayer. Cysteine 432 is a heme binding site.

This sequence belongs to the cytochrome P450 family. Heme is required as a cofactor.

It is found in the membrane. In terms of biological role, valencene oxidase, which preferentially hydroylates the C2 position of (+)-valencene in the trans-orientation, producing trans-nootkatol that can be further oxidized to (+)-nootkatone. Can also catalyze the three-step conversion of germacrene A to germacra-1(10),4,11(13)-trien-12-oic acid and the partial conversion of the non-natural substrate amorpha-4,11-diene into artemisinic alcohol and artemisinic aldehyde. The protein is Cytochrome P450 71AV8 (CYP71AV8) of Cichorium intybus (Chicory).